We begin with the raw amino-acid sequence, 1046 residues long: MSAVTTDEIWPLKVLLDTLRSLSSRTSPTEPWGATATAEARAAIGSFFLASGTMSILQVELTWRDTFSAILEVYKQTRSPEASMLAQNFVGLILWRISVRWDKTSWQENSHRLRRLVAEMTGEEAISWLSRNNLRISAPFGPSVMWPLISEWFAVFEDAANHAFTYTPEHLLSEREFSFNVGDLAASLAHKRFELIYDFPFVQEGIRLVSIASGWIAPFVIMYRCTTNRVFTPLTRILFTIALVDQYFRGLHAPQPFQIKDRFAEDVGALGSKELIPALEANSTKRTSYEVRASAAIAYESPFVHTIQPGMAADKLRNGSDIIMSDTSLTEDSLAIHLSAVLRLISDIGLEEDNGAIDAAKAKLSNSARRAWDAIQYSSSPKQLLEALIERGFVRQVCRAYESALKTYFTRNYGSVDEGDIFDDVQQVVGCVAVIGNVVFGLIESYGPGMTYLSNYMENCVISESDSHFIEALGLERAIISQIIGRCIPPIPHEDYIKAARAVLVAEMDHVASKSEAVGFRQSIRSAKESLMLWFDNRANEIWGIVPPDESNVLNLDANLPNSDYSNVDSNVEQDEFDGERESEMIRLASTIRYPEPMPITPESTTPHFLKYIIATVCLDALTSVTTAIFSTPRLGTALKVLTWARDYGMPYLDSFINHRGKLNALISAIIPFTQDISNAPTTDDALNIEMLLGELYDVISVAISMLPQEARPFLPPRPDPSNSNVLISMHGTALHLQLNYLAERTFDCVEHLSNKSKQLVVFASIFKDFFTCKFVSGISGGTVKLYHHSELHSSLGTWKIFDVMTAIRELYDSANNIIADIRLDSMKLRTIIEETGKQLLLCDDIMEQANALGQDAVKLFSVLGADFAGLTRLQNSLDLHIRKLTSCNTPPGMQDICWLLGRWSILSEINSTYRDRSSHELVSAIENVGGVLQDMMDHDLASIGTDDKSVAGEIEFAVESVMRDYPVITEDDTTLVVTLSSRHNLTHRDEINFCTLDIETIAPDDVDLTSFARDFITKQRVTADALVNIIDTVFNTGRRANGDNA.

The tract at residues 543-1046 (WGIVPPDESN…TGRRANGDNA (504 aa)) is interaction with large tegument protein.

This sequence belongs to the herpesviridae inner tegument protein family. Interacts (via C-terminus) with the large tegument protein/LTP (via N-terminus).

Its subcellular location is the virion tegument. It localises to the host cytoplasm. The protein localises to the host nucleus. The protein resides in the host Golgi apparatus. It is found in the host trans-Golgi network. In terms of biological role, plays an essential role in cytoplasmic secondary envelopment during viral egress. Interacts with the capsid via the large tegument protein/LTP and participates in its transport to the host trans-Golgi network (TGN) where secondary envelopment occurs. Modulates tegumentation and capsid accumulation at the viral assembly complex. The protein is Inner tegument protein (MDV050) of Gallid herpesvirus 2 (strain Chicken/Md5/ATCC VR-987) (GaHV-2).